The chain runs to 113 residues: Single-stranded DNA-binding protein B (113 aa).

Residues Met1 to Asp104 enclose the SSB domain. Tyr82 bears the Phosphotyrosine mark.

In terms of assembly, homotetramer. Phosphorylated by YwqD, which increases ssDNA affinity; dephosphorylated by YwqE.

The protein localises to the cytoplasm. Its function is as follows. Not essential for replication of the chromosome, but is required for optimal competence. Binds ssDNA, binding is facilitated by DprA, acts as an accessory factor for homologous DNA strand exchange. This Bacillus subtilis (strain 168) protein is Single-stranded DNA-binding protein B (ssbB).